Reading from the N-terminus, the 1357-residue chain is DNA-directed RNA polymerase subunit beta (1357 aa).

Belongs to the RNA polymerase beta chain family. As to quaternary structure, the RNAP catalytic core consists of 2 alpha, 1 beta, 1 beta' and 1 omega subunit. When a sigma factor is associated with the core the holoenzyme is formed, which can initiate transcription.

The enzyme catalyses RNA(n) + a ribonucleoside 5'-triphosphate = RNA(n+1) + diphosphate. Its function is as follows. DNA-dependent RNA polymerase catalyzes the transcription of DNA into RNA using the four ribonucleoside triphosphates as substrates. The sequence is that of DNA-directed RNA polymerase subunit beta from Pseudomonas aeruginosa (strain LESB58).